The primary structure comprises 809 residues: Cyclic nucleotide-gated channel beta-3 (809 aa).

Disordered stretches follow at residues M1–A121 and G153–D178. Topologically, residues M1–Y218 are cytoplasmic. The span at Q22 to S31 shows a compositional bias: basic and acidic residues. Residues H32–Q43 show a composition bias toward polar residues. Positions E44–L53 are enriched in basic and acidic residues. The segment covering T55–P88 has biased composition (polar residues). The chain crosses the membrane as a helical span at residues L219–F242. The Extracellular segment spans residues P243 to N249. Residues I250–F270 traverse the membrane as a helical segment. The Cytoplasmic portion of the chain corresponds to I271–K299. A helical membrane pass occupies residues F300–F317. Topologically, residues G318 to N320 are extracellular. Residues P321 to F335 traverse the membrane as a helical segment. The Cytoplasmic segment spans residues E336–A348. Residues A348–A447 form an ion conduction pathway region. Residues Y349–Y371 form a helical membrane-spanning segment. Residues Y372 to E393 lie on the Extracellular side of the membrane. 2 helical membrane-spanning segments follow: residues Y394–I420 and V421–I445. Residues T407–G410 are selectivity filter. Residues G446–Q809 lie on the Cytoplasmic side of the membrane. Residues A450–K526 are C-linker. The cyclic nucleotide-binding domain stretch occupies residues T530 to L646. 3',5'-cyclic GMP contacts are provided by G591, E592, R604, and T605. Residues Q698 to P776 are disordered. The segment covering N716–E755 has biased composition (basic and acidic residues).

This sequence belongs to the cyclic nucleotide-gated cation channel (TC 1.A.1.5) family. CNGB3 subfamily. In terms of assembly, forms heterotetrameric channels composed of CNGA3 and CNGB3 subunits with 3:1 stoichiometry. As to expression, expressed specifically in the retina.

Its subcellular location is the cell membrane. The catalysed reaction is Ca(2+)(in) = Ca(2+)(out). It carries out the reaction Na(+)(in) = Na(+)(out). It catalyses the reaction K(+)(in) = K(+)(out). The enzyme catalyses NH4(+)(in) = NH4(+)(out). The catalysed reaction is Rb(+)(in) = Rb(+)(out). It carries out the reaction Li(+)(in) = Li(+)(out). It catalyses the reaction Cs(+)(in) = Cs(+)(out). Its function is as follows. Pore-forming subunit of the cone cyclic nucleotide-gated channel. Mediates cone photoresponses at bright light converting transient changes in intracellular cGMP levels into electrical signals. In the dark, cGMP levels are high and keep the channel open enabling a steady inward current carried by Na(+) and Ca(2+) ions that leads to membrane depolarization and neurotransmitter release from synaptic terminals. Upon photon absorption cGMP levels decline leading to channel closure and membrane hyperpolarization that ultimately slows neurotransmitter release and signals the presence of light, the end point of the phototransduction cascade. Conducts cGMP- and cAMP-gated ion currents, with permeability for monovalent and divalent cations. In Homo sapiens (Human), this protein is Cyclic nucleotide-gated channel beta-3.